The following is a 297-amino-acid chain: uncharacterized protein (297 aa).

4 helical membrane-spanning segments follow: residues 3–23 (DYIY…LYML), 38–58 (VIHI…MPAL), 103–123 (IEGI…TALL), and 128–148 (YVFL…LLAM).

It localises to the cell membrane. This is an uncharacterized protein from Bacillus subtilis (strain 168).